Reading from the N-terminus, the 378-residue chain is MNNTEYYDRLGVSKDASQDDIKKAYRKMSKKYHPDINKEAGAEQKYKDVQEAYETLSDSQKRAAYDQYGAAGAQGGFGGGAGGFGGFDGGGFGGFEDIFSSFFGGGGSRNPNAPRQGDDLQYRVNLSFEEAVFGVEKEVSYNREATCGTCLGSGAKPGTAPVTCRKCHGSGVMTIDTQTPLGMMRRQVTCDICHGSGKEIKEPCQTCHGTGHEKQAHKVSVKIPAGVETGQQIRLQGQGEAGFNGGPYGDLFVILNVLPSKQFERNGSTIYYSLDISFTQAALGDTVEIPTVHGDVEMAIPAGTQTGKTFRLKGKGAPKLRGGGQGDQHVTVNIVTPTKLNDAQREALQAFAEASGDKMLHPKKKGFFDKVKDALEDI.

The J domain maps to 5–69; the sequence is EYYDRLGVSK…QKRAAYDQYG (65 aa). A CR-type zinc finger spans residues 134–216; sequence GVEKEVSYNR…CHGTGHEKQA (83 aa). C147, C150, C164, C167, C190, C193, C204, and C207 together coordinate Zn(2+). CXXCXGXG motif repeat units lie at residues 147-154, 164-171, 190-197, and 204-211; these read CGTCLGSG, CRKCHGSG, CDICHGSG, and CQTCHGTG.

It belongs to the DnaJ family. In terms of assembly, homodimer. It depends on Zn(2+) as a cofactor.

The protein resides in the cytoplasm. In terms of biological role, participates actively in the response to hyperosmotic and heat shock by preventing the aggregation of stress-denatured proteins and by disaggregating proteins, also in an autonomous, DnaK-independent fashion. Unfolded proteins bind initially to DnaJ; upon interaction with the DnaJ-bound protein, DnaK hydrolyzes its bound ATP, resulting in the formation of a stable complex. GrpE releases ADP from DnaK; ATP binding to DnaK triggers the release of the substrate protein, thus completing the reaction cycle. Several rounds of ATP-dependent interactions between DnaJ, DnaK and GrpE are required for fully efficient folding. Also involved, together with DnaK and GrpE, in the DNA replication of plasmids through activation of initiation proteins. The sequence is that of Chaperone protein DnaJ from Streptococcus pyogenes serotype M6 (strain ATCC BAA-946 / MGAS10394).